The sequence spans 757 residues: RNA exonuclease 3 (757 aa).

Disordered regions lie at residues 56-259 (VKRE…AEHL) and 474-590 (ESLD…CDQA). A compositionally biased stretch (basic and acidic residues) spans 120 to 132 (EGGRAEGAEKKEF). 3 stretches are compositionally biased toward polar residues: residues 145-172 (TPHA…SSVS), 202-223 (QPSS…SSPK), and 230-240 (MTTSASPSQSR). Composition is skewed to low complexity over residues 244-253 (RNTSASPSSS) and 474-502 (ESLD…KTAS). The segment covering 503 to 516 (RPASTPTKSLTSSL) has biased composition (polar residues). 2 stretches are compositionally biased toward basic and acidic residues: residues 543 to 557 (REPD…RGIG) and 565 to 581 (SQER…RVRE). An Exonuclease domain is found at 597–751 (VVAVDCEMLY…EDALAALDVV (155 aa)).

Belongs to the REXO1/REXO3 family.

The protein localises to the cytoplasm. It is found in the nucleus. Its function is as follows. 3' to 5' exoribonuclease required for proper 3' end maturation of MRP RNA and of the U5L snRNA. This Yarrowia lipolytica (strain CLIB 122 / E 150) (Yeast) protein is RNA exonuclease 3 (REX3).